The following is a 323-amino-acid chain: Beta-ketoacyl-[acyl-carrier-protein] synthase III (323 aa).

Active-site residues include C113 and H250. Residues 251-255 (QANRR) form an ACP-binding region. N280 is a catalytic residue.

This sequence belongs to the thiolase-like superfamily. FabH family. Homodimer.

It is found in the cytoplasm. The catalysed reaction is malonyl-[ACP] + acetyl-CoA + H(+) = 3-oxobutanoyl-[ACP] + CO2 + CoA. Its pathway is lipid metabolism; fatty acid biosynthesis. Its function is as follows. Catalyzes the condensation reaction of fatty acid synthesis by the addition to an acyl acceptor of two carbons from malonyl-ACP. Catalyzes the first condensation reaction which initiates fatty acid synthesis and may therefore play a role in governing the total rate of fatty acid production. Possesses both acetoacetyl-ACP synthase and acetyl transacylase activities. Its substrate specificity determines the biosynthesis of branched-chain and/or straight-chain of fatty acids. The chain is Beta-ketoacyl-[acyl-carrier-protein] synthase III from Rhizobium rhizogenes (strain K84 / ATCC BAA-868) (Agrobacterium radiobacter).